The chain runs to 176 residues: Sarcoplasmic calcium-binding protein (176 aa).

T1 carries the post-translational modification N-acetylthreonine. EF-hand domains are found at residues 3-38 (YLVS…FTDL), 55-90 (KWWD…AFLA), 91-126 (TMTA…FGHE), and 127-160 (NESV…SFVT). Ca(2+) is bound by residues D16, N18, D20, and N27. The Ca(2+) site is built by D104, D106, D108, S110, and E115.

Like parvalbumins, SCPs seem to be more abundant in fast contracting muscles, but no functional relationship can be established from this distribution. This chain is Sarcoplasmic calcium-binding protein, found in Mizuhopecten yessoensis (Japanese scallop).